A 345-amino-acid polypeptide reads, in one-letter code: MAETDSFLHLARPLGPMAVGSAPTTAPLNVVIHPQALFSILDHSLRRNADQERVIGTLLGTRSEDGTEVEIRTTFAVGHTETTDQVEVDMEYQKQMLALHLKANPKEVLVGWYATSSELNTFSALIQNFYSGQGDGTFPHPAVHLTVSTEPGKDVETRAYISAPVGVTAERAADSAAFIPVPYEIRYGETEKSGLESIAAARDVESRAANIFTDIEALERAVEEVLGMIDRVSKYVESVIDEEAPASTALGQFLLNALALAPKVEPADIERDFNNHIQDVLVVSYLANTIRTQMELSNRLATAQLTLGGESGNAESGQRGGQRGGKGGRGGQQRTQDRSGEEARA.

The region spanning 30-166 (VVIHPQALFS…TRAYISAPVG (137 aa)) is the MPN domain. The disordered stretch occupies residues 308 to 345 (GGESGNAESGQRGGQRGGKGGRGGQQRTQDRSGEEARA). Over residues 318-331 (QRGGQRGGKGGRGG) the composition is skewed to gly residues. Residues 335 to 345 (TQDRSGEEARA) show a composition bias toward basic and acidic residues.

It belongs to the eIF-3 subunit F family. As to quaternary structure, component of the eukaryotic translation initiation factor 3 (eIF-3) complex.

The protein localises to the cytoplasm. Its function is as follows. Component of the eukaryotic translation initiation factor 3 (eIF-3) complex, which is involved in protein synthesis of a specialized repertoire of mRNAs and, together with other initiation factors, stimulates binding of mRNA and methionyl-tRNAi to the 40S ribosome. The eIF-3 complex specifically targets and initiates translation of a subset of mRNAs involved in cell proliferation. The sequence is that of Eukaryotic translation initiation factor 3 subunit F from Aspergillus oryzae (strain ATCC 42149 / RIB 40) (Yellow koji mold).